The following is a 301-amino-acid chain: HTH-type transcriptional regulator MtrA (301 aa).

One can recognise an HTH araC/xylS-type domain in the interval 196 to 297 (KRLGHLIQKV…HVSPGQYRKE (102 aa)). 2 consecutive DNA-binding regions (H-T-H motif) follow at residues 216–237 (DKMV…KSQV) and 264–287 (VLEV…KRQY).

The affinity for the mtrCDE promoter increases 2-fold in the presence of TX-100, a known effector and substrate of the MtrCDE pump. Its function is as follows. Involved in the induction of the mtrCDE-encoded efflux pump. Binds specifically to the mtrCDE promoter region. Required for high-level inducible resistance to the detergent Triton X-100 (TX-100) and the spermicide nonoxynol-9 (N-9). The sequence is that of HTH-type transcriptional regulator MtrA from Neisseria gonorrhoeae.